The following is a 38-amino-acid chain: Iota-conotoxin-like L11.5 (38 aa).

4 disulfides stabilise this stretch: Cys5–Cys19, Cys12–Cys24, Cys18–Cys29, and Cys23–Cys36.

It belongs to the conotoxin I1 superfamily. Expressed by the venom duct.

It is found in the secreted. Its function is as follows. Iota-conotoxins bind to voltage-gated sodium channels (Nav) and act as agonists by shifting the voltage-dependence of activation to more hyperpolarized levels. Produces general excitatory symptoms. The polypeptide is Iota-conotoxin-like L11.5 (Conus lynceus (Lynceus cone)).